Consider the following 595-residue polypeptide: MADANAMEGEKSIPTKIPHWRQVTDPGAVTPEIINYPYPGSGTEADPYLVQWIPSDPRNPMNYSAVKKWSITFVVAIATLAVALISSAYTGGAIEIAQEFHADAEVITLGVSLFVLGFAIGPLIWAPMSELFGRQLLFFGTYLALTAFNAGAAGSPNMATLLVLRFFAGSFGSSPLTNAGGVIADMFPASHRGLAMGIFAIAPFLGPVLGPVIGGFLGESAGWRWVEGFLAIFSGVVWIIGSIFLPETYPPVLLRKRAQRLSKLTGKVYASRMDIEQGKLSIGQAFKTALMRPWILLFREPIVLLLSTYMAIVYGTLYMLFSAFPVVYQQHRGWSPGIGGLAFLGVLGGILAAMVINLLDNKRYAKVSKEYNGFAPPEERLPVAIIGGIAIPIGLFWFAWTNGPQIHWIVSIIASAPFGFGMVLVFLSLMNYLIDAYTIYAASVLAANSVLRSLFGAAFPLFTRYMYQNLGIHWASTIPAFLALACVPFPFLFYIYGANIRKRCKFAGEADAFMQKLMQANSAHLESDLEVSEAGPIPRRNSLEAREVLDRIQSARSGLTRTRTAATVEYEGNPYDIDRVNTGLSRVSTTNSQTR.

A glycan (N-linked (GlcNAc...) asparagine) is linked at Asn-62. 12 helical membrane passes run 69–89, 106–126, 136–156, 166–186, 197–217, 225–245, 301–321, 336–356, 381–401, 409–429, 442–462, and 478–498; these read WSIT…SSAY, VITL…LIWA, LLFF…AGSP, FFAG…IADM, GIFA…GGFL, WVEG…SIFL, PIVL…YMLF, PGIG…AMVI, LPVA…FAWT, IVSI…FLSL, ASVL…FPLF, and IPAF…IYGA.

The protein belongs to the major facilitator superfamily. DHA1 family. Polyamines/proton antiporter (TC 2.A.1.2.16) subfamily.

The protein localises to the cell membrane. Functionally, MFS-type efflux pump involved in the modulation susceptibility to fluconazole and voriconazole, 2 azoles with similar molecular structure. In Trichophyton rubrum (strain ATCC MYA-4607 / CBS 118892) (Athlete's foot fungus), this protein is MFS-type efflux pump MFS2.